The following is a 201-amino-acid chain: Potassium-transporting ATPase KdpC subunit (201 aa).

The helical transmembrane segment at V10 to I30 threads the bilayer. A disordered region spans residues H67 to A105. Residues P70–T82 show a composition bias toward low complexity. The segment covering K83–A105 has biased composition (polar residues).

Belongs to the KdpC family. As to quaternary structure, the system is composed of three essential subunits: KdpA, KdpB and KdpC.

It is found in the cell inner membrane. In terms of biological role, part of the high-affinity ATP-driven potassium transport (or Kdp) system, which catalyzes the hydrolysis of ATP coupled with the electrogenic transport of potassium into the cytoplasm. This subunit acts as a catalytic chaperone that increases the ATP-binding affinity of the ATP-hydrolyzing subunit KdpB by the formation of a transient KdpB/KdpC/ATP ternary complex. The polypeptide is Potassium-transporting ATPase KdpC subunit (Rhodopseudomonas palustris (strain BisB5)).